A 203-amino-acid chain; its full sequence is Urease accessory protein UreG (203 aa).

Residue 12–19 (GPVGSGKT) participates in GTP binding.

This sequence belongs to the SIMIBI class G3E GTPase family. UreG subfamily. Homodimer. UreD, UreF and UreG form a complex that acts as a GTP-hydrolysis-dependent molecular chaperone, activating the urease apoprotein by helping to assemble the nickel containing metallocenter of UreC. The UreE protein probably delivers the nickel.

The protein resides in the cytoplasm. Functionally, facilitates the functional incorporation of the urease nickel metallocenter. This process requires GTP hydrolysis, probably effectuated by UreG. The sequence is that of Urease accessory protein UreG from Alteromonas mediterranea (strain DSM 17117 / CIP 110805 / LMG 28347 / Deep ecotype).